The sequence spans 119 residues: Ribonuclease P protein component (119 aa).

Belongs to the RnpA family. In terms of assembly, consists of a catalytic RNA component (M1 or rnpB) and a protein subunit.

The catalysed reaction is Endonucleolytic cleavage of RNA, removing 5'-extranucleotides from tRNA precursor.. RNaseP catalyzes the removal of the 5'-leader sequence from pre-tRNA to produce the mature 5'-terminus. It can also cleave other RNA substrates such as 4.5S RNA. The protein component plays an auxiliary but essential role in vivo by binding to the 5'-leader sequence and broadening the substrate specificity of the ribozyme. This chain is Ribonuclease P protein component, found in Aeromonas hydrophila subsp. hydrophila (strain ATCC 7966 / DSM 30187 / BCRC 13018 / CCUG 14551 / JCM 1027 / KCTC 2358 / NCIMB 9240 / NCTC 8049).